A 444-amino-acid chain; its full sequence is MWMRRNQIVRKLTLGVVTTVLGMSLSFSALSATPVETHGQLSIENGRLVDEQGKRVQLRGVSSHGLQWFGDYVNKDSMKWLRDDWGINVFRVAMYTAADGYISNPSLANKVKEAVAAAQSLGVYIIIDWHILSDNDPNIYKAQAKTFFAEMAGLYGSSPNVIYEIANEPNGGVTWNGQIRPYALEVTDTIRSKDPDNLIIVGTGTWSQDIHDAADNQLPDPNTLYALHFYAGTHGQFLRDRIDYAQSRGAAIFVSEWGTSDASGNGGPFLPESQTWIDFLNNRGVSWVNWSLTDKSEASAALAPGASKSGGWTEQNLSTSGKFVREQIRAGANLGGGDTPTTPTTPTEPTNPGNGTTGDVVLQYRNVDNNPSDDAIRMAVNIKNTGSTPIKLSDLQVRYYFHDDGKPGANLFVDWANVGPNNIVTSTGTPAASTDKANRYVLVT.

The signal sequence occupies residues 1–31 (MWMRRNQIVRKLTLGVVTTVLGMSLSFSALS). Residues His-64, 68 to 69 (WF), Tyr-95, and His-130 each bind substrate. The active-site Proton donor is the Glu-168. Tyr-230 is a substrate binding site. The Nucleophile role is filled by Glu-256. Substrate contacts are provided by residues 262–263 (AS), Trp-290, and 295–297 (KSE). The segment at 332–358 (ANLGGGDTPTTPTTPTEPTNPGNGTTG) is disordered. The segment covering 339-358 (TPTTPTTPTEPTNPGNGTTG) has biased composition (low complexity). In terms of domain architecture, CBM3 spans 356-444 (TTGDVVLQYR…DKANRYVLVT (89 aa)).

The protein belongs to the glycosyl hydrolase 5 (cellulase A) family.

It localises to the secreted. It carries out the reaction Endohydrolysis of (1-&gt;4)-beta-D-glucosidic linkages in cellulose, lichenin and cereal beta-D-glucans.. This is Endoglucanase N (celN) from Pectobacterium atrosepticum (Erwinia carotovora subsp. atroseptica).